The sequence spans 145 residues: Ribosomal RNA large subunit methyltransferase H (145 aa).

S-adenosyl-L-methionine contacts are provided by residues G94 and 113–118; that span reads LSPLTF.

It belongs to the RNA methyltransferase RlmH family. Homodimer.

It localises to the cytoplasm. The enzyme catalyses pseudouridine(1915) in 23S rRNA + S-adenosyl-L-methionine = N(3)-methylpseudouridine(1915) in 23S rRNA + S-adenosyl-L-homocysteine + H(+). Specifically methylates the pseudouridine at position 1915 (m3Psi1915) in 23S rRNA. The chain is Ribosomal RNA large subunit methyltransferase H from Sorangium cellulosum (strain So ce56) (Polyangium cellulosum (strain So ce56)).